The chain runs to 720 residues: Ornithine decarboxylase (720 aa).

The residue at position 354 (Lys-354) is an N6-(pyridoxal phosphate)lysine.

Belongs to the Orn/Lys/Arg decarboxylase class-I family. It depends on pyridoxal 5'-phosphate as a cofactor.

The enzyme catalyses L-ornithine + H(+) = putrescine + CO2. The polypeptide is Ornithine decarboxylase (speF) (Haemophilus influenzae (strain ATCC 51907 / DSM 11121 / KW20 / Rd)).